The sequence spans 158 residues: Protein FAM177B (158 aa).

Positions 36 to 48 (EYSTEEEEEEEKE) are enriched in acidic residues. A disordered region spans residues 36-59 (EYSTEEEEEEEKEEQSTNSTLDPS).

Belongs to the FAM177 family.

This is Protein FAM177B (FAM177B) from Homo sapiens (Human).